The primary structure comprises 214 residues: Large ribosomal subunit protein uL16 (214 aa).

Position 32 is a citrulline (Arg32). Residue Lys175 forms a Glycyl lysine isopeptide (Lys-Gly) (interchain with G-Cter in SUMO2) linkage. A Glycyl lysine isopeptide (Lys-Gly) (interchain with G-Cter in ubiquitin) cross-link involves residue Lys188.

The protein belongs to the universal ribosomal protein uL16 family. As to quaternary structure, component of the large ribosomal subunit. Mature ribosomes consist of a small (40S) and a large (60S) subunit. The 40S subunit contains about 33 different proteins and 1 molecule of RNA (18S). The 60S subunit contains about 49 different proteins and 3 molecules of RNA (28S, 5.8S and 5S). Citrullinated by PADI4. Post-translationally, ufmylated by UFL1.

It is found in the cytoplasm. Its function is as follows. Component of the large ribosomal subunit. Plays a role in the formation of actively translating ribosomes. May play a role in the embryonic brain development. The polypeptide is Large ribosomal subunit protein uL16 (Rattus norvegicus (Rat)).